The chain runs to 239 residues: LRRN4 C-terminal-like protein (239 aa).

The first 19 residues, 1 to 19, serve as a signal peptide directing secretion; the sequence is MLGSLSLLWLAAMTTSLVS. At 20 to 194 the chain is on the extracellular side; sequence QPQILTLEDY…KFIMPPKPVT (175 aa). A Fibronectin type-III domain is found at 82 to 179; the sequence is QPEPPRLGEV…EGPENWTGPS (98 aa). N-linked (GlcNAc...) asparagine glycosylation is found at N132 and N174. Residues 195 to 215 traverse the membrane as a helical segment; the sequence is LVYAAVGVGTALALLSCAALV. Topologically, residues 216–239 are cytoplasmic; sequence WHFCLRERWGCPRRQGMAQASEAL.

Its subcellular location is the membrane. This is LRRN4 C-terminal-like protein (Lrrn4cl) from Mus musculus (Mouse).